Consider the following 113-residue polypeptide: U11-theraphotoxin-Hhn1a (113 aa).

A signal peptide spans 1–21 (MNTVRVTFLLVFVLAVSLGQA). Positions 22–74 (DKDENRMEMQKKTEQGKSYLDFAENLLLQKLEELEAKLLEEDSEESRNSRQKR) are excised as a propeptide. 3 disulfide bridges follow: Cys75–Cys90, Cys82–Cys95, and Cys89–Cys110.

The protein belongs to the neurotoxin 14 (magi-1) family. 01 (HNTX-16) subfamily. In terms of tissue distribution, expressed by the venom gland.

It localises to the secreted. Its function is as follows. Probable ion channel inhibitor. In Cyriopagopus hainanus (Chinese bird spider), this protein is U11-theraphotoxin-Hhn1a.